The sequence spans 193 residues: Recombination protein RecR (193 aa).

The C4-type; degenerate zinc finger occupies 61–76 (CASCNALSETEVSEIC). In terms of domain architecture, Toprim spans 84–170 (SQLCMVLHPR…TFTKIAQGVP (87 aa)).

The protein belongs to the RecR family.

Its function is as follows. May play a role in DNA repair. It seems to be involved in an RecBC-independent recombinational process of DNA repair. It may act with RecF and RecO. The chain is Recombination protein RecR from Helicobacter pylori (strain J99 / ATCC 700824) (Campylobacter pylori J99).